A 426-amino-acid chain; its full sequence is Trigger factor 1 (426 aa).

The region spanning 163-248 (QDTVNIDFAG…VNKLKRKEYA (86 aa)) is the PPIase FKBP-type domain.

It belongs to the FKBP-type PPIase family. Tig subfamily.

The protein resides in the cytoplasm. The enzyme catalyses [protein]-peptidylproline (omega=180) = [protein]-peptidylproline (omega=0). Its function is as follows. Involved in protein export. Acts as a chaperone by maintaining the newly synthesized protein in an open conformation. Functions as a peptidyl-prolyl cis-trans isomerase. The sequence is that of Trigger factor 1 from Desulfitobacterium hafniense (strain Y51).